The following is a 539-amino-acid chain: Chaperonin GroEL 2 (539 aa).

ATP-binding positions include 30 to 33 (TLGP), Lys-51, 87 to 91 (DGTTT), Gly-415, 480 to 482 (NAA), and Asp-496.

It belongs to the chaperonin (HSP60) family. Forms a cylinder of 14 subunits composed of two heptameric rings stacked back-to-back. Interacts with the co-chaperonin GroES.

It localises to the cytoplasm. The catalysed reaction is ATP + H2O + a folded polypeptide = ADP + phosphate + an unfolded polypeptide.. In terms of biological role, together with its co-chaperonin GroES, plays an essential role in assisting protein folding. The GroEL-GroES system forms a nano-cage that allows encapsulation of the non-native substrate proteins and provides a physical environment optimized to promote and accelerate protein folding. In Sphingopyxis alaskensis (strain DSM 13593 / LMG 18877 / RB2256) (Sphingomonas alaskensis), this protein is Chaperonin GroEL 2.